Here is a 260-residue protein sequence, read N- to C-terminus: Carbonic anhydrase 3 (260 aa).

Residue alanine 2 is modified to N-acetylalanine. Residues 3–259 (KEWGYASHNG…VKGRVVRASF (257 aa)) enclose the Alpha-carbonic anhydrase domain. Residues serine 29, serine 43, serine 48, serine 50, and serine 55 each carry the phosphoserine modification. An involved in proton transfer region spans residues 64–67 (KTCR). Threonine 73 bears the Phosphothreonine mark. Residues histidine 94, histidine 96, and histidine 119 each coordinate Zn(2+). Phosphotyrosine is present on tyrosine 127. Phosphothreonine occurs at positions 129 and 176. S-glutathionyl cysteine occurs at positions 182 and 187. Residue 198–199 (TT) coordinates substrate. Threonine 216 bears the Phosphothreonine mark. Serine 219 is subject to Phosphoserine.

The protein belongs to the alpha-carbonic anhydrase family. The cofactor is Zn(2+). In terms of processing, S-thiolated both by thiol-disulfide exchange with glutathione disulfide and by oxyradical-initiated S-thiolation with reduced glutathione. S-glutathionylated in hepatocytes under oxidative stress. In terms of tissue distribution, expressed at lower levels in adipose tissue from animals that were either genetically obese or had experimentally induced obesity.

It localises to the cytoplasm. The catalysed reaction is hydrogencarbonate + H(+) = CO2 + H2O. Inhibited by acetazolamide. Reversible hydration of carbon dioxide. The sequence is that of Carbonic anhydrase 3 from Mus musculus (Mouse).